We begin with the raw amino-acid sequence, 608 residues long: RAS guanyl-releasing protein 2 (608 aa).

The 123-residue stretch at 4–126 (TLDLDKGCTV…SLIDIESVPT (123 aa)) folds into the N-terminal Ras-GEF domain. A phosphoserine mark is found at Ser116, Ser117, and Ser147. The 234-residue stretch at 154 to 387 (EPMELAEHLT…YQLSLQREPR (234 aa)) folds into the Ras-GEF domain. The interval 382–405 (LQREPRSKSSPTSPTSCTPPPRPP) is disordered. 2 EF-hand domains span residues 426 to 461 (HIEK…FPYL) and 463 to 490 (AFGD…SSSV). Ca(2+) is bound by residues Asp439, Asp441, Asp443, His445, Glu450, Asp468, Asn470, Asp472, Cys474, and Glu479. Residues 498–548 (VHNLQESNSLRPVACRHCKALILGIYKQGLKCRACGVNCHKQCKDRLSVEC) form a Phorbol-ester/DAG-type zinc finger. Ser554 and Ser575 each carry phosphoserine. Positions 555 to 596 (VSLEGSAPSPSPTHTHHRAFSFSLPRPGRRSSRPPEIREEEV) are disordered.

It belongs to the RASGRP family. In terms of assembly, forms a signaling complex with RAP1 and BRAF. Interacts with F-actin. Interacts with RAP1. In terms of tissue distribution, expressed in striatal neurons (at protein level). Expressed in the hematopoietic system. Detected in olfactory structures and deep cortical layers of brain.

The protein localises to the cytoplasm. The protein resides in the cytosol. It is found in the cell membrane. Its subcellular location is the synapse. It localises to the synaptosome. The protein localises to the cell projection. The protein resides in the ruffle membrane. In terms of biological role, functions as a calcium- and DAG-regulated nucleotide exchange factor specifically activating Rap through the exchange of bound GDP for GTP. May also activate other GTPases such as RRAS, RRAS2, NRAS, KRAS but not HRAS. Functions in aggregation of platelets and adhesion of T-lymphocytes and neutrophils probably through inside-out integrin activation. May function in the muscarinic acetylcholine receptor M1/CHRM1 signaling pathway. This Rattus norvegicus (Rat) protein is RAS guanyl-releasing protein 2 (Rasgrp2).